The following is a 215-amino-acid chain: Large ribosomal subunit protein uL3 (215 aa).

The segment at 136-155 (GVSISHRSHGSTGQRQDPGK) is disordered. The residue at position 151 (Q151) is an N5-methylglutamine.

This sequence belongs to the universal ribosomal protein uL3 family. Part of the 50S ribosomal subunit. Forms a cluster with proteins L14 and L19. In terms of processing, methylated by PrmB.

In terms of biological role, one of the primary rRNA binding proteins, it binds directly near the 3'-end of the 23S rRNA, where it nucleates assembly of the 50S subunit. The chain is Large ribosomal subunit protein uL3 from Rickettsia felis (strain ATCC VR-1525 / URRWXCal2) (Rickettsia azadi).